Here is a 753-residue protein sequence, read N- to C-terminus: Probable tubulin--tyrosine ligase PBY1 (753 aa).

The TTL domain occupies 343–734; the sequence is MEYIYKPLTH…PIFNENRNKT (392 aa).

This sequence belongs to the tubulin--tyrosine ligase family. Requires Mg(2+) as cofactor. K(+) is required as a cofactor.

It localises to the cytoplasm. It is found in the P-body. The enzyme catalyses C-terminal L-alpha-aminoacyl-L-glutamyl-L-glutamyl-[tubulin] + L-tyrosine + ATP = C-terminal L-alpha-aminoacyl-L-glutamyl-L-glutamyl-L-tyrosyl-[tubulin] + ADP + phosphate + H(+). Its function is as follows. Probable P-body-associated tubulin--tyrosine ligase. This Saccharomyces cerevisiae (strain ATCC 204508 / S288c) (Baker's yeast) protein is Probable tubulin--tyrosine ligase PBY1 (PBY1).